The chain runs to 323 residues: tRNA dimethylallyltransferase (323 aa).

12–19 (GPTAAGKT) is a binding site for ATP. 14–19 (TAAGKT) contacts substrate. Interaction with substrate tRNA regions lie at residues 37–40 (DSAL) and 161–165 (QRLMR).

It belongs to the IPP transferase family. As to quaternary structure, monomer. It depends on Mg(2+) as a cofactor.

The enzyme catalyses adenosine(37) in tRNA + dimethylallyl diphosphate = N(6)-dimethylallyladenosine(37) in tRNA + diphosphate. Its function is as follows. Catalyzes the transfer of a dimethylallyl group onto the adenine at position 37 in tRNAs that read codons beginning with uridine, leading to the formation of N6-(dimethylallyl)adenosine (i(6)A). The polypeptide is tRNA dimethylallyltransferase (Pseudomonas paraeruginosa (strain DSM 24068 / PA7) (Pseudomonas aeruginosa (strain PA7))).